The chain runs to 405 residues: Potassium channel subfamily K member 13 (405 aa).

At 1 to 19 the chain is on the cytoplasmic side; sequence MAGRGCSCSPGHLNEDNAR. A helical membrane pass occupies residues 20–40; the sequence is FLLLAGLILLYLLGGAAVFSA. N-linked (GlcNAc...) asparagine glycosylation is found at asparagine 59 and asparagine 65. An intramembrane region (pore-forming) is located at residues 95-115; it reads WDFTGAFYFVGTVVTTIGFGM. K(+) contacts are provided by threonine 110, isoleucine 111, and glycine 112. Positions 110–115 are selectivity filter 1; it reads TIGFGM. A helical transmembrane segment spans residues 125-145; that stretch reads VFLIFYGLIGCASTILFFNLF. Residues 146-193 lie on the Cytoplasmic side of the membrane; it reads LERLITVIAYVMRTCHHQQLRRRGTVARDNRKAPRKGEADSLAGWKPS. Residues 194-214 form a helical membrane-spanning segment; that stretch reads VYYVMLILCLASVAISCGASA. The segment at residues 224–244 is an intramembrane region (pore-forming); the sequence is YFDSVYFCFVASSTIGFGDLV. The K(+) site is built by threonine 237, isoleucine 238, glycine 239, and phenylalanine 240. The interval 237 to 242 is selectivity filter 2; sequence TIGFGD. Residues 263–283 form a helical membrane-spanning segment; that stretch reads FFILMGVCCIYSMFNVISILI. The Cytoplasmic portion of the chain corresponds to 284–405; it reads KQTVNWILRK…NRLAETSGDR (122 aa).

This sequence belongs to the two pore domain potassium channel (TC 1.A.1.8) family. Homodimer. Heterodimer with KCNK12. In terms of tissue distribution, ubiquitous. In brain expression is rather low and restricted to the olfactory bulb and tubercle, to the ventromedial hypothalamic nucleus, lateral septal nucleus dorsal, lateral mammillary nucleus, lateral parabrachial nuclei, reticular nucleus and reunions nuclei.

It is found in the cell membrane. The catalysed reaction is K(+)(in) = K(+)(out). The channel currents are activated by arachidonic acid, inhibited by volatile anesthetic halothane, partially inhibited by Ba(2+) ions and only weakly inhibited by extracellular acidification to pH 6. In terms of biological role, k(+) channel that conducts outward rectifying tonic currents potentiated by purinergic signals. Homo- and heterodimerizes to form functional channels with distinct regulatory and gating properties. Contributes most of K(+) currents at the plasma membrane of resting microglia. Maintains a depolarized membrane potential required for proper ramified microglia morphology and phagocytosis, selectively mediating microglial pruning of presynaptic compartments at hippocampal excitatory synapses. Upon local release of ATP caused by neuronal injury or infection, it is potentiated by P2RY12 and P2RX7 receptor signaling and contributes to ATP-triggered K(+) efflux underlying microglial NLRP3 inflammasome assembly and IL1B release. This Rattus norvegicus (Rat) protein is Potassium channel subfamily K member 13.